A 1373-amino-acid polypeptide reads, in one-letter code: Ribonuclease 3 (1373 aa).

Disordered stretches follow at residues methionine 1 to proline 99, methionine 119 to leucine 406, and phenylalanine 447 to serine 496. The segment covering proline 47–serine 69 has biased composition (low complexity). 3 stretches are compositionally biased toward pro residues: residues phenylalanine 70–proline 99, methionine 119–glycine 133, and methionine 144–methionine 159. 2 stretches are compositionally biased toward low complexity: residues proline 160 to proline 169 and asparagine 185 to proline 200. 3 stretches are compositionally biased toward basic and acidic residues: residues glutamine 214–arginine 271, arginine 278–arginine 288, and arginine 297–arginine 312. Residues serine 354 and serine 372 each carry the phosphoserine modification. Basic and acidic residues-rich tracts occupy residues arginine 363–lysine 398 and phenylalanine 447–lysine 459. The necessary for interaction with DGCR8 and pri-miRNA processing activity stretch occupies residues lysine 389–glutamate 1364. The segment covering glutamate 474–serine 490 has biased composition (acidic residues). 7 residues coordinate Zn(2+): cysteine 535, cysteine 537, histidine 548, cysteine 560, histidine 608, cysteine 675, and histidine 679. RNase III domains lie at leucine 875–serine 1055 and leucine 1106–aspartate 1232. Glutamate 968 is a binding site for Mg(2+). Histidine 1025 serves as a coordination point for Zn(2+). Mg(2+)-binding residues include asparagine 1041, glutamate 1044, glutamate 1146, aspartate 1218, and glutamate 1221. The region spanning aspartate 1259–phenylalanine 1333 is the DRBM domain.

This sequence belongs to the ribonuclease III family. In terms of assembly, component of the microprocessor complex, or pri-miRNA processing protein complex, which is composed of DROSHA and DGCR8. The microprocessor complex is a heterotrimer; each of the two DROSHA RNase III domains binds one DGCR8 (via C-terminal region). Interacts with SP1 and SNIP1. Interacts with SRRT/ARS2. Interacts with CPSF3 and ISY1; this interaction is in an RNA dependent manner. Interacts with PUS10; interaction promotes pri-miRNAs processing. Mg(2+) is required as a cofactor. Requires Mn(2+) as cofactor. Degraded by autophagy in response to neuronal activity in motor neurons. In terms of tissue distribution, expressed in motor neurons (at protein level).

The protein resides in the nucleus. It localises to the nucleolus. It is found in the cytoplasm. The enzyme catalyses Endonucleolytic cleavage to 5'-phosphomonoester.. Functionally, ribonuclease III double-stranded (ds) RNA-specific endoribonuclease that is involved in the initial step of microRNA (miRNA) biogenesis. Component of the microprocessor complex that is required to process primary miRNA transcripts (pri-miRNAs) to release precursor miRNA (pre-miRNA) in the nucleus. Within the microprocessor complex, DROSHA cleaves the 3' and 5' strands of a stem-loop in pri-miRNAs (processing center 11 bp from the dsRNA-ssRNA junction) to release hairpin-shaped pre-miRNAs that are subsequently cut by the cytoplasmic DICER to generate mature miRNAs. Involved also in pre-rRNA processing. Cleaves double-strand RNA and does not cleave single-strand RNA. Involved in the formation of GW bodies. Plays a role in growth homeostasis in response to autophagy in motor neurons. The sequence is that of Ribonuclease 3 (Drosha) from Mus musculus (Mouse).